Reading from the N-terminus, the 102-residue chain is A-type ATP synthase subunit F (102 aa).

It belongs to the V-ATPase F subunit family. In terms of assembly, has multiple subunits with at least A(3), B(3), C, D, E, F, H, I and proteolipid K(x).

The protein resides in the cell membrane. Functionally, component of the A-type ATP synthase that produces ATP from ADP in the presence of a proton gradient across the membrane. The protein is A-type ATP synthase subunit F of Thermococcus kodakarensis (strain ATCC BAA-918 / JCM 12380 / KOD1) (Pyrococcus kodakaraensis (strain KOD1)).